The sequence spans 311 residues: tRNA-cytidine(32) 2-sulfurtransferase (311 aa).

Positions 47–52 match the PP-loop motif motif; that stretch reads SGGKDS. Positions 122, 125, and 213 each coordinate [4Fe-4S] cluster.

It belongs to the TtcA family. Homodimer. It depends on Mg(2+) as a cofactor. [4Fe-4S] cluster serves as cofactor.

The protein resides in the cytoplasm. The catalysed reaction is cytidine(32) in tRNA + S-sulfanyl-L-cysteinyl-[cysteine desulfurase] + AH2 + ATP = 2-thiocytidine(32) in tRNA + L-cysteinyl-[cysteine desulfurase] + A + AMP + diphosphate + H(+). It functions in the pathway tRNA modification. In terms of biological role, catalyzes the ATP-dependent 2-thiolation of cytidine in position 32 of tRNA, to form 2-thiocytidine (s(2)C32). The sulfur atoms are provided by the cysteine/cysteine desulfurase (IscS) system. This Escherichia coli O139:H28 (strain E24377A / ETEC) protein is tRNA-cytidine(32) 2-sulfurtransferase.